The following is a 139-amino-acid chain: MAPKAEKKPAEKKPVEEKAEKKPKAEKRVPGAKEGGGEKKGKKKAKKSVETYKIYIFKVLKQVHPDIGISSKAMSIMNSFINDIFEKLAQEAARLARYNKKPTITSREIQTSVRLVLPGELAKHAVSEGTKAVTKFTSS.

Basic and acidic residues predominate over residues 1–39; that stretch reads MAPKAEKKPAEKKPVEEKAEKKPKAEKRVPGAKEGGGEK. The tract at residues 1 to 47 is disordered; the sequence is MAPKAEKKPAEKKPVEEKAEKKPKAEKRVPGAKEGGGEKKGKKKAKK. 2 positions are modified to N6-acetyllysine: K7 and K27. Residue K135 forms a Glycyl lysine isopeptide (Lys-Gly) (interchain with G-Cter in ubiquitin) linkage.

The protein belongs to the histone H2B family. As to quaternary structure, the nucleosome is a histone octamer containing two molecules each of H2A, H2B, H3 and H4 assembled in one H3-H4 heterotetramer and two H2A-H2B heterodimers. The octamer wraps approximately 147 bp of DNA. In terms of processing, can be acetylated to form H2BK6ac and H2BK33ac. Post-translationally, monoubiquitinated by BRE1 to form H2BK143ub1 and deubiquitinated by UBP26. Required for heterochromatic histone H3 di- and trimethylation at H3K4me. May give a specific tag for epigenetic transcriptional activation.

It localises to the nucleus. Its subcellular location is the chromosome. Its function is as follows. Core component of nucleosome. Nucleosomes wrap and compact DNA into chromatin, limiting DNA accessibility to the cellular machineries which require DNA as a template. Histones thereby play a central role in transcription regulation, DNA repair, DNA replication and chromosomal stability. DNA accessibility is regulated via a complex set of post-translational modifications of histones, also called histone code, and nucleosome remodeling. This Oryza sativa subsp. indica (Rice) protein is Histone H2B.11 (H2B.11).